The chain runs to 559 residues: MTQNINKIYLPSPNKYLSREDFLNYTNLMREIANFDPSTKKWYINEYKISRLTKDELKGIIDQIAEYIGNSIYNILSNYIKDDNNIINAYIKGNYIYIRDNLEKYKNLLTYKIKTFDYKEGKYTEEEILLAWQKSYGFVTLRGLYWKLKNIANFDLKPFTNLRFYDIQLKNFEMRNYQINSIKSWVSDVNVIGNGIIKAPTGSGKSVIAILSALEILKNKNNAKIVYAVNSTTLLKQFQNFAKKEDLPFVLVSGEIDEIKKGERSDFIALSISYYYSKKKRNEHEKLKELVTNADLVIIDEAHHTPANIVKSLLLDSPNSIRLGLSATPIREDGKELEIMGLLGKISFTIDYTELVRNRYLVPIEYIRYIPEIPKKLKLKIQDLDDNKDPENFAKYYSSLLRSFEHSPNTNKQIISKIKQLNQYPCLVIVRRIAIAKKLAEIMRENGIIADWVSSKTKLEERMEKIEALKNEKLQVLISTSLADEGLDIPNLRLVVLLTQGKSRIKLIQRIGRVMRVSQNKRKGYILDVIYNHDLFIKQSVKKMNFIENEYNGIITIHY.

The region spanning 186 to 347 (VSDVNVIGNG…EIMGLLGKIS (162 aa)) is the Helicase ATP-binding domain. Residue 199-206 (APTGSGKS) participates in ATP binding. The DEAH box motif lies at 300 to 303 (DEAH). A Helicase C-terminal domain is found at 410 to 552 (TNKQIISKIK…KMNFIENEYN (143 aa)).

This is Putative helicase 22 (SIFV0022) from Sulfolobus islandicus filamentous virus (isolate Iceland/Hveragerdi) (SIFV).